The chain runs to 121 residues: Ig heavy chain V region MPC 11 (121 aa).

An Ig-like domain is found at 1–112; it reads EAQLQQSGAE…NSSPYFDSWG (112 aa).

This is Ig heavy chain V region MPC 11 from Mus musculus (Mouse).